The sequence spans 123 residues: Ribosome-binding factor A (123 aa).

The protein belongs to the RbfA family. Monomer. Binds 30S ribosomal subunits, but not 50S ribosomal subunits or 70S ribosomes.

It localises to the cytoplasm. One of several proteins that assist in the late maturation steps of the functional core of the 30S ribosomal subunit. Associates with free 30S ribosomal subunits (but not with 30S subunits that are part of 70S ribosomes or polysomes). Required for efficient processing of 16S rRNA. May interact with the 5'-terminal helix region of 16S rRNA. In Neisseria meningitidis serogroup C (strain 053442), this protein is Ribosome-binding factor A.